The primary structure comprises 785 residues: Protein PHTF2 (785 aa).

A PHTF domain is found at 46-191 (IQCLIGAYDQ…VHCQIVSTRT (146 aa)). The next 2 membrane-spanning stretches (helical) occupy residues 136–156 (VIFFWLLVLYLLQVAAIVLFC) and 164–184 (IPLTEVIGPIWLMLLLGTVHC). Disordered regions lie at residues 190-239 (RTPK…GTST) and 304-401 (RPEE…PESE). Positions 200–209 (GKRRRKLRKA) are enriched in basic residues. Residues 210-219 (AHLEVHREGD) show a composition bias toward basic and acidic residues. Polar residues-rich tracts occupy residues 220-239 (GSSTTDNTQEGAVQNHGTST) and 309-333 (AWNTGTLRNGPSKDTQRTITNVSDE). Residue asparagine 329 is glycosylated (N-linked (GlcNAc...) asparagine). The segment covering 359–369 (RNRKSHHYKKH) has biased composition (basic residues). A compositionally biased stretch (low complexity) spans 378–390 (SGTSCSSRCSSSR). Positions 391-400 (QDSESARPES) are enriched in basic and acidic residues. A run of 4 helical transmembrane segments spans residues 497–517 (IGYQIFGNAVSLILGLTPFVF), 553–573 (VIISFVVRVSLVWIFFFLLCV), 634–654 (VIVSSAFLLTISVVFICCAQL), and 668–688 (WELVIWCISLTLFLLRFVTLG). 2 N-linked (GlcNAc...) asparagine glycosylation sites follow: asparagine 697 and asparagine 756. Residues 760–780 (VVILSAVSGVISDLLGFNLKL) form a helical membrane-spanning segment.

The protein localises to the membrane. In Homo sapiens (Human), this protein is Protein PHTF2 (PHTF2).